Reading from the N-terminus, the 648-residue chain is Interferon-induced GTP-binding protein Mx1 (648 aa).

Methionine 1 carries the post-translational modification N-acetylmethionine. The disordered stretch occupies residues 1-26 (MVHSDLGIEELDSPESSLNGSEDMES). The region spanning 56–329 (DLALPAIAVI…LIMHICKTLP (274 aa)) is the Dynamin-type G domain. The segment at 66–73 (GDQSSGKS) is G1 motif. 66–73 (GDQSSGKS) is a GTP binding site. A G2 motif region spans residues 91-93 (VTR). A G3 motif region spans residues 167-170 (DLPG). GTP-binding positions include 167 to 171 (DLPGI) and 236 to 239 (TKPD). Residues 236–239 (TKPD) form a G4 motif region. A G5 motif region spans residues 268-271 (KCRG). A bundle signaling element (BSE) region spans residues 330–355 (LLENQIKETHQRITEELQKYGKDIPE). Positions 355–522 (EEESEKMFCL…HFQMEQLVYC (168 aa)) are middle domain. The interval 356–618 (EESEKMFCLI…KDQYDWLLKE (263 aa)) is stalk. Positions 543–546 (KNKK) are critical for lipid-binding. A GED domain is found at 560–648 (TDEIFQHLTA…ARQRLAKFPG (89 aa)).

Belongs to the TRAFAC class dynamin-like GTPase superfamily. Dynamin/Fzo/YdjA family. As to quaternary structure, homooligomer. Oligomerizes into multimeric filamentous or ring-like structures by virtue of its stalk domain. Oligomerization is critical for GTPase activity, protein stability, and recognition of viral target structures. Interacts with TRPC1, TRPC3, TRPC4, TRPC5, TRPC6 and TRPC7. Interacts with HSPA5. Interacts with TUBB/TUBB5. Interacts with DDX39A and DDX39B. In terms of processing, ISGylated. In terms of tissue distribution, ubiquitously expressed.

The protein resides in the cytoplasm. The protein localises to the endoplasmic reticulum membrane. It is found in the perinuclear region. Its subcellular location is the nucleus. Its function is as follows. Interferon-induced dynamin-like GTPase with antiviral activity against rabies virus (RABV), vesicular stomatitis virus (VSV) and murine pneumonia virus (MPV). Isoform 1 but not isoform 2 shows antiviral activity against vesicular stomatitis virus (VSV). The sequence is that of Interferon-induced GTP-binding protein Mx1 (MX1) from Bos taurus (Bovine).